The chain runs to 94 residues: Putative regulatory protein LEPBI_I0950 (94 aa).

It belongs to the RemA family.

The polypeptide is Putative regulatory protein LEPBI_I0950 (Leptospira biflexa serovar Patoc (strain Patoc 1 / ATCC 23582 / Paris)).